Consider the following 407-residue polypeptide: Phospholipid-transporting ATPase accessory subunit CDC50 (407 aa).

Positions 1–33 are disordered; it reads MAPRRRRGAGQDGSDDGRSDSDAPKNRPPNTAF. Residues 1–48 are Cytoplasmic-facing; sequence MAPRRRRGAGQDGSDDGRSDSDAPKNRPPNTAFRQQRMRAWQCVLTPK. The segment covering 15 to 25 has biased composition (basic and acidic residues); that stretch reads DDGRSDSDAPK. A helical transmembrane segment spans residues 49-69; the sequence is LIVTVFSILAAIYLGFGAWLT. Topologically, residues 70 to 359 are extracellular; the sequence is YLAHTVRDLK…TMGSRNIWPG (290 aa). Cys85 and Cys139 are disulfide-bonded. Residues Asn131 and Asn189 are each glycosylated (N-linked (GlcNAc...) asparagine). Cys193 and Cys210 are disulfide-bonded. N-linked (GlcNAc...) asparagine glycans are attached at residues Asn219, Asn232, Asn241, and Asn314. The chain crosses the membrane as a helical span at residues 360–380; it reads IIFLIVGGICLVLDIYFILSF. Residues 381–407 are Cytoplasmic-facing; sequence FIWRPRKLGDPSYLSWNQPSAPGGHSS.

Belongs to the CDC50/LEM3 family. As to quaternary structure, component of a flippase complex consisting of DNF1 and CDC50. Interacts with DNF1; the interaction is direct.

It is found in the cell membrane. In terms of biological role, accessory component of a P4-ATPase flippase complex which catalyzes the hydrolysis of ATP coupled to the transport of phosphatidylcholine and phosphatidylserine from the lumen to the cytosolic leaflet of membranes and ensures the maintenance of asymmetric distribution of phospholipids. In Chaetomium thermophilum (strain DSM 1495 / CBS 144.50 / IMI 039719) (Thermochaetoides thermophila), this protein is Phospholipid-transporting ATPase accessory subunit CDC50.